The primary structure comprises 232 residues: Large ribosomal subunit protein uL1 (232 aa).

This sequence belongs to the universal ribosomal protein uL1 family. In terms of assembly, part of the 50S ribosomal subunit.

Its function is as follows. Binds directly to 23S rRNA. The L1 stalk is quite mobile in the ribosome, and is involved in E site tRNA release. Functionally, protein L1 is also a translational repressor protein, it controls the translation of the L11 operon by binding to its mRNA. This Burkholderia multivorans (strain ATCC 17616 / 249) protein is Large ribosomal subunit protein uL1.